A 236-amino-acid chain; its full sequence is CD81 antigen (236 aa).

The Cytoplasmic segment spans residues Met-1–Tyr-12. The chain crosses the membrane as a helical span at residues Leu-13–Leu-33. The Extracellular portion of the chain corresponds to Trp-34–Tyr-63. A helical membrane pass occupies residues Ile-64–Ile-84. Residues Gln-85–Cys-89 lie on the Cytoplasmic side of the membrane. A helical membrane pass occupies residues Leu-90–Gly-112. Over Phe-113–Lys-201 the chain is Extracellular. 2 disulfide bridges follow: Cys-156/Cys-190 and Cys-157/Cys-175. Residues Leu-202–Met-224 form a helical membrane-spanning segment. Glu-219 is a binding site for cholesterol. Over Val-225–Tyr-236 the chain is Cytoplasmic.

It belongs to the tetraspanin (TM4SF) family. As to quaternary structure, homodimer. Part of a complex composed of CD19, CR2/CD21, CD81 and IFITM1/CD225 in the membrane of mature B cells. Interacts (via the second extracellular domain) with CD19; this interaction is initiated early during biosynthesis in the ER and enables trafficking of only properly folded CD19. Part of a complex that includes MHC class II/HLA-DR molecules and IFITM1. Interacts with IFITM1. Interacts with IFITM2 and IFITM3. Part of integrin-tetraspanin complex composed of CD9, CD81, beta-1 and beta-2 integrins in the membrane of monocyte/macrophages. Interacts (via the second extracellular domain) with integrin ITGAV:ITGB3. Interacts with CD247/CD3 zeta, ICAM1 and CD9 at the immune synapse on T cell membrane. Part of a GPCR-tetraspanin complex consisting at least of ADGRG1, CD81, possibly CD9, and GNA11 in which CD81 enhances the association of ADGRG1 with GNA11. Part of a complex composed of CD9, CD81, PTGFRN and IGSF8. Interacts directly with IGSF8. Interacts with CD53 and SCIMP. Interacts with SAMHD1 (via its C-terminus). Interacts with glypican GPC3 and with the transcriptional repressor HHEX; binding to GPC3 decreases the availability of free CD81 for binding to HHEX, resulting in nuclear translocation of HHEX and transcriptional repression. Interacts with CLDN1. Interacts with CLDN6 and CLDN9. In terms of processing, not glycosylated. Post-translationally, likely constitutively palmitoylated at low levels. Protein palmitoylation is up-regulated upon coligation of BCR and CD9-C2R-CD81 complexes in lipid rafts.

The protein resides in the cell membrane. It localises to the basolateral cell membrane. Structural component of specialized membrane microdomains known as tetraspanin-enriched microdomains (TERMs), which act as platforms for receptor clustering and signaling. Essential for trafficking and compartmentalization of CD19 receptor on the surface of activated B cells. Upon initial encounter with microbial pathogens, enables the assembly of CD19-CR2/CD21 and B cell receptor (BCR) complexes at signaling TERMs, lowering the threshold dose of antigen required to trigger B cell clonal expansion and antibody production. In T cells, facilitates the localization of CD247/CD3 zeta at antigen-induced synapses with B cells, providing for costimulation and polarization toward T helper type 2 phenotype. Present in MHC class II compartments, may also play a role in antigen presentation. Can act both as positive and negative regulator of homotypic or heterotypic cell-cell fusion processes. Positively regulates sperm-egg fusion and may be involved in acrosome reaction. In myoblasts, associates with CD9 and PTGFRN and inhibits myotube fusion during muscle regeneration. In macrophages, associates with CD9 and beta-1 and beta-2 integrins, and prevents macrophage fusion into multinucleated giant cells specialized in ingesting complement-opsonized large particles. Also prevents the fusion of mononuclear cell progenitors into osteoclasts in charge of bone resorption. May regulate the compartmentalization of enzymatic activities. In T cells, defines the subcellular localization of dNTPase SAMHD1 and permits its degradation by the proteasome, thereby controlling intracellular dNTP levels. Also involved in cell adhesion and motility. Positively regulates integrin-mediated adhesion of macrophages, particularly relevant for the inflammatory response in the lung. This is CD81 antigen (CD81) from Pan troglodytes (Chimpanzee).